Consider the following 156-residue polypeptide: ATP synthase subunit b', chloroplastic (156 aa).

Residues 24 to 44 (ATLPLVAIQFILLMVLLNILL) form a helical membrane-spanning segment.

The protein belongs to the ATPase B chain family. F-type ATPases have 2 components, F(1) - the catalytic core - and F(0) - the membrane proton channel. F(1) has five subunits: alpha(3), beta(3), gamma(1), delta(1), epsilon(1). F(0) has four main subunits: a(1), b(1), b'(1) and c(10-14). The alpha and beta chains form an alternating ring which encloses part of the gamma chain. F(1) is attached to F(0) by a central stalk formed by the gamma and epsilon chains, while a peripheral stalk is formed by the delta, b and b' chains.

Its subcellular location is the plastid. It localises to the chloroplast thylakoid membrane. Functionally, f(1)F(0) ATP synthase produces ATP from ADP in the presence of a proton or sodium gradient. F-type ATPases consist of two structural domains, F(1) containing the extramembraneous catalytic core and F(0) containing the membrane proton channel, linked together by a central stalk and a peripheral stalk. During catalysis, ATP synthesis in the catalytic domain of F(1) is coupled via a rotary mechanism of the central stalk subunits to proton translocation. Component of the F(0) channel, it forms part of the peripheral stalk, linking F(1) to F(0). The b'-subunit is a diverged and duplicated form of b found in plants and photosynthetic bacteria. This Phaeodactylum tricornutum (strain CCAP 1055/1) protein is ATP synthase subunit b', chloroplastic.